Reading from the N-terminus, the 605-residue chain is DNA mismatch repair protein MutL (605 aa).

This sequence belongs to the DNA mismatch repair MutL/HexB family.

In terms of biological role, this protein is involved in the repair of mismatches in DNA. It is required for dam-dependent methyl-directed DNA mismatch repair. May act as a 'molecular matchmaker', a protein that promotes the formation of a stable complex between two or more DNA-binding proteins in an ATP-dependent manner without itself being part of a final effector complex. This chain is DNA mismatch repair protein MutL, found in Methylocella silvestris (strain DSM 15510 / CIP 108128 / LMG 27833 / NCIMB 13906 / BL2).